The primary structure comprises 158 residues: Transcriptional regulator MraZ (158 aa).

SpoVT-AbrB domains are found at residues 7–57 (THQN…PTAA) and 86–129 (AYPV…EPAA). A disordered region spans residues 133 to 158 (RRAEARTRSRQLALPAQGRRQGGADA).

Belongs to the MraZ family. Forms oligomers.

It localises to the cytoplasm. The protein resides in the nucleoid. The polypeptide is Transcriptional regulator MraZ (Gluconacetobacter diazotrophicus (strain ATCC 49037 / DSM 5601 / CCUG 37298 / CIP 103539 / LMG 7603 / PAl5)).